The chain runs to 73 residues: DNA-directed RNA polymerase subunit omega (73 aa).

Belongs to the RNA polymerase subunit omega family. As to quaternary structure, the RNAP catalytic core consists of 2 alpha, 1 beta, 1 beta' and 1 omega subunit. When a sigma factor is associated with the core the holoenzyme is formed, which can initiate transcription.

The catalysed reaction is RNA(n) + a ribonucleoside 5'-triphosphate = RNA(n+1) + diphosphate. In terms of biological role, promotes RNA polymerase assembly. Latches the N- and C-terminal regions of the beta' subunit thereby facilitating its interaction with the beta and alpha subunits. This chain is DNA-directed RNA polymerase subunit omega, found in Clostridium novyi (strain NT).